Here is a 554-residue protein sequence, read N- to C-terminus: MSAIPKKCTVLVIGGGPGGSYAASALAREGIDTVVLEGDKFPRYHIGESMLASMRHLLKFVELDGKFDSYGFVKKPGAAFKLNKNKREGYTDFLAAGGPNNYAWNVVRSEADNLMFQHAGESGAKIFDGVSVKSIQFENPTEVPDGEPNLNPGKPVSATYQIKETKEQGQIDFDYVVDASGRIGILSTKYMKNRRYNQGLKNIANWGYWEGCNKYAPGTPRENSPFFEALQDESGWAWFIPLHNGTVSVGVVMNQKLATQKKQEADLDSTEFYHDTLNKISPNLRELIGDGKFVSNVKTASDYSYSASSYSFPYARIVGDAGCFIDPYFSSGVHLALTSGLSAATTISASIRGQVDEELGSEWHTKKFSDAYTRFLLVVLSAYKQIRHQEEPVLSDFDEDNFDRAFSFFRPIIQGTADAANNKLSQEELNKTLEFCAFAFEPVENDEDRSKAMSAMQEAVDNGTGYHPDLSPEQLKAVKHIQARRAMRTSDTMNIESFGTDAINGFVPNLVRGSLGLRKQEAMSGDMGGANGHVDETNGVTVNGHHQPEGVKAH.

G15, G18, and E48 together coordinate FAD. Chloride-binding residues include S331 and G332. An FAD-binding site is contributed by V333.

The protein belongs to the flavin-dependent halogenase family.

The catalysed reaction is ilicicolin B + FADH2 + chloride + O2 = ilicicolin A + FAD + 2 H2O + H(+). The protein operates within secondary metabolite biosynthesis; terpenoid biosynthesis. Functionally, flavin-dependent halogenase; part of the asc-1 gene cluster that mediates the biosynthesis of both ascochlorin and ascofuranone, a strong inhibitor of cyanide-insensitive alternative oxidases and a promising drug candidate against African trypanosomiasis. The first step in the pathway is performed by the non-reducing polyketide synthase ascC that produces orsellinic acid by condensing acetyl-CoA with 3 malonyl-CoA units. Orsellinic acid is then prenylated by the prenyltransferase ascA to yield ilicicolinic acid B. Ilicicolinic acid B is further reduced to ilicicolin B by the reductase ascB. The halogenase ascD then chlorinates ilicicolin B to produce ilicicolin A which is converted to ilicicolin A epoxide by the cytochrome P450 monooxygenase ascE that catalyzes stereoselective epoxidation of the terminal double bond of the prenyl group. Ilicicolin A epoxide is the last common precursor for the biosynthesis of ascofuranone and ascochlorin. The terpene cyclase ascF produces a monocyclic terpene, and the cyclization reaction is proposed to be initiated by protonation of the terminal epoxide of ilicicolin A epoxide to generate a monocyclic tertiarycation, which is followed by a series of hydride and methyl shifts with abstraction of proton, leading to the formation of the (14S,15R,19R)-trimethylcyclohexanone ring structure of ilicicolin C, which is finally reduced to ascochlorin by the dehydrogenase ascG. On the other hand, ilicicolin A epoxide is hydroxylated by the cytochrome P450 monooxygenase ascH, and the resultant product is cyclized by the terpene cyclase ascI to ascofuranol via protonation-initiated epoxide ring opening, which facilitates the 6-endo-tet cyclization to form the tetrahy-drofuran ring. Finally, ascofuranol is oxidized into ascofuranone by ascJ. The chain is Flavin-dependent halogenase ascD from Acremonium egyptiacum (Oospora egyptiaca).